The chain runs to 274 residues: HTH-type transcriptional regulator GadX (274 aa).

Residues 145-242 (TRVCTVINNN…GMTPTEYQER (98 aa)) enclose the HTH araC/xylS-type domain. DNA-binding regions (H-T-H motif) lie at residues 162–183 (ARIASELLMSPSLLKKKLREEG) and 209–232 (IKRVAVSCGYHSVSYFIYVFRNYY).

As to quaternary structure, homodimer.

Positively regulates the expression of about fifteen genes involved in acid resistance such as gadA, gadB and gadC. Depending on the conditions (growth phase and medium), can repress gadW. This is HTH-type transcriptional regulator GadX (gadX) from Escherichia coli O6:H1 (strain CFT073 / ATCC 700928 / UPEC).